A 179-amino-acid chain; its full sequence is Large ribosomal subunit protein uL5 (179 aa).

Belongs to the universal ribosomal protein uL5 family. In terms of assembly, part of the 50S ribosomal subunit; part of the 5S rRNA/L5/L18/L25 subcomplex. Contacts the 5S rRNA and the P site tRNA. Forms a bridge to the 30S subunit in the 70S ribosome.

This is one of the proteins that bind and probably mediate the attachment of the 5S RNA into the large ribosomal subunit, where it forms part of the central protuberance. In the 70S ribosome it contacts protein S13 of the 30S subunit (bridge B1b), connecting the 2 subunits; this bridge is implicated in subunit movement. Contacts the P site tRNA; the 5S rRNA and some of its associated proteins might help stabilize positioning of ribosome-bound tRNAs. The protein is Large ribosomal subunit protein uL5 of Erwinia tasmaniensis (strain DSM 17950 / CFBP 7177 / CIP 109463 / NCPPB 4357 / Et1/99).